The following is a 474-amino-acid chain: Glutamate--tRNA ligase 1 (474 aa).

The short motif at 11 to 21 (PSPTGYLHIGG) is the 'HIGH' region element. The 'KMSKS' region motif lies at 240-244 (KLSKR). K243 lines the ATP pocket.

The protein belongs to the class-I aminoacyl-tRNA synthetase family. Glutamate--tRNA ligase type 1 subfamily. Monomer.

The protein localises to the cytoplasm. The enzyme catalyses tRNA(Glu) + L-glutamate + ATP = L-glutamyl-tRNA(Glu) + AMP + diphosphate. Functionally, catalyzes the attachment of glutamate to tRNA(Glu) in a two-step reaction: glutamate is first activated by ATP to form Glu-AMP and then transferred to the acceptor end of tRNA(Glu). This chain is Glutamate--tRNA ligase 1, found in Mesorhizobium japonicum (strain LMG 29417 / CECT 9101 / MAFF 303099) (Mesorhizobium loti (strain MAFF 303099)).